The primary structure comprises 267 residues: 4-hydroxy-tetrahydrodipicolinate reductase (267 aa).

NAD(+) contacts are provided by residues 8–13 and D34; that span reads GAAGRM. Residue R35 participates in NADP(+) binding. NAD(+) is bound by residues 98 to 100 and 122 to 125; these read GTT and AANF. H155 acts as the Proton donor/acceptor in catalysis. (S)-2,3,4,5-tetrahydrodipicolinate is bound at residue H156. K159 serves as the catalytic Proton donor. 165 to 166 is a binding site for (S)-2,3,4,5-tetrahydrodipicolinate; it reads GT.

Belongs to the DapB family.

Its subcellular location is the cytoplasm. It catalyses the reaction (S)-2,3,4,5-tetrahydrodipicolinate + NAD(+) + H2O = (2S,4S)-4-hydroxy-2,3,4,5-tetrahydrodipicolinate + NADH + H(+). The catalysed reaction is (S)-2,3,4,5-tetrahydrodipicolinate + NADP(+) + H2O = (2S,4S)-4-hydroxy-2,3,4,5-tetrahydrodipicolinate + NADPH + H(+). It participates in amino-acid biosynthesis; L-lysine biosynthesis via DAP pathway; (S)-tetrahydrodipicolinate from L-aspartate: step 4/4. In terms of biological role, catalyzes the conversion of 4-hydroxy-tetrahydrodipicolinate (HTPA) to tetrahydrodipicolinate. In Pseudomonas savastanoi pv. phaseolicola (strain 1448A / Race 6) (Pseudomonas syringae pv. phaseolicola (strain 1448A / Race 6)), this protein is 4-hydroxy-tetrahydrodipicolinate reductase.